The primary structure comprises 623 residues: Glutathione import ATP-binding protein GsiA (623 aa).

2 consecutive ABC transporter domains span residues 15-269 (VENL…RALL) and 314-564 (LRVR…RKLL). Residues 49-56 (GESGSGKS) and 357-364 (GESGSGKS) contribute to the ATP site.

It belongs to the ABC transporter superfamily. Glutathione importer (TC 3.A.1.5.11) family. As to quaternary structure, the complex is composed of two ATP-binding proteins (GsiA), two transmembrane proteins (GsiC and GsiD) and a solute-binding protein (GsiB).

It is found in the cell inner membrane. The catalysed reaction is glutathione(out) + ATP + H2O = glutathione(in) + ADP + phosphate + H(+). In terms of biological role, part of the ABC transporter complex GsiABCD involved in glutathione import. Responsible for energy coupling to the transport system. This Escherichia coli O157:H7 protein is Glutathione import ATP-binding protein GsiA.